The primary structure comprises 1102 residues: Phosphatidylinositol 4,5-bisphosphate 3-kinase catalytic subunit gamma isoform (1102 aa).

The 108-residue stretch at 34–141 folds into the PI3K-ABD domain; it reads SMELIPIEFV…PGQIHVVQRH (108 aa). One can recognise a PI3K-RBD domain in the interval 217–309; sequence NNCVFIVIHR…GEEIHLVLDT (93 aa). A C2 PI3K-type domain is found at 357 to 521; the sequence is CDRKFRVKIR…NSMSISILLD (165 aa). Positions 541-723 constitute a PIK helical domain; the sequence is DRVRAEMPNQ…AVILEAYLRG (183 aa). The region spanning 797 to 1080 is the PI3K/PI4K catalytic domain; that stretch reads VIEKCKVMAS…QIEVCRDKGW (284 aa). A G-loop region spans residues 803–809; that stretch reads VMASKKK. ATP is bound by residues 829-838 and 864-872; these read GIIFKHGDDL and LLPYGCIST. The catalytic loop stretch occupies residues 943–951; the sequence is GIGDRHNDN. Residue 961–969 coordinates ATP; that stretch reads FHIDFGHIL. The segment at 962–988 is activation loop; sequence HIDFGHILGNYKSFLGINKERVPFVLT. The residue at position 1024 (threonine 1024) is a Phosphothreonine; by PKA. The residue at position 1101 (serine 1101) is a Phosphoserine; by autocatalysis.

The protein belongs to the PI3/PI4-kinase family. As to quaternary structure, heterodimer of a catalytic subunit PIK3CG and a PIK3R5 or PIK3R6 regulatory subunit. Interacts with GRK2 through the PIK helical domain. Interaction with GRK2 is required for targeting to agonist-occupied receptor. Interacts with PDE3B; regulates PDE3B activity and thereby cAMP levels in cells. Interacts with TPM2. Interacts with EPHA8; regulates integrin-mediated cell adhesion to substrate. Interacts with HRAS; the interaction is required for membrane recruitment and beta-gamma G protein dimer-dependent activation of the PI3K gamma complex PIK3CG:PIK3R6. Autophosphorylation at Ser-1101 has no effect on the phosphatidylinositol-4,5-bisphosphate 3-kinase activity.

It is found in the cytoplasm. The protein resides in the cell membrane. The enzyme catalyses a 1,2-diacyl-sn-glycero-3-phospho-(1D-myo-inositol-4,5-bisphosphate) + ATP = a 1,2-diacyl-sn-glycero-3-phospho-(1D-myo-inositol-3,4,5-trisphosphate) + ADP + H(+). It catalyses the reaction a 1,2-diacyl-sn-glycero-3-phospho-(1D-myo-inositol) + ATP = a 1,2-diacyl-sn-glycero-3-phospho-(1D-myo-inositol-3-phosphate) + ADP + H(+). It carries out the reaction a 1,2-diacyl-sn-glycero-3-phospho-(1D-myo-inositol 4-phosphate) + ATP = a 1,2-diacyl-sn-glycero-3-phospho-(1D-myo-inositol-3,4-bisphosphate) + ADP + H(+). The catalysed reaction is L-seryl-[protein] + ATP = O-phospho-L-seryl-[protein] + ADP + H(+). Its pathway is phospholipid metabolism; phosphatidylinositol phosphate biosynthesis. Its activity is regulated as follows. Activated by both the alpha and the beta-gamma G proteins following stimulation of G protein-coupled receptors (GPCRs). Activation by GPCRs is assisted by the regulatory subunits (PIK3R5 or PIK3R6) leading to the translocation from the cytosol to the plasma membrane and to kinase activation. When bound to PIK3R5 the PI3K activity of PIK3CG could be activated greater than 100-fold by the beta-gamma G proteins. Functionally, phosphoinositide-3-kinase (PI3K) that phosphorylates PtdIns(4,5)P2 (Phosphatidylinositol 4,5-bisphosphate) to generate phosphatidylinositol 3,4,5-trisphosphate (PIP3). PIP3 plays a key role by recruiting PH domain-containing proteins to the membrane, including AKT1 and PDPK1, activating signaling cascades involved in cell growth, survival, proliferation, motility and morphology. Links G-protein coupled receptor activation to PIP3 production. Involved in immune, inflammatory and allergic responses. Modulates leukocyte chemotaxis to inflammatory sites and in response to chemoattractant agents. May control leukocyte polarization and migration by regulating the spatial accumulation of PIP3 and by regulating the organization of F-actin formation and integrin-based adhesion at the leading edge. Controls motility of dendritic cells. Participates in T-lymphocyte migration. Regulates T-lymphocyte proliferation and cytokine production. Required for B-lymphocyte development and signaling. Together with other PI3Ks are involved in the oxidative burst produced by neutrophils in response to chemotactic agents. Together with PIK3CD regulate neutrophil extravasation. Together with PIK3CB promotes platelet aggregation and thrombosis. Regulates alpha-IIb/beta-3 integrins (ITGA2B/ ITGB3) adhesive function in platelets downstream of P2Y12 through a lipid kinase activity-independent mechanism. May have also a lipid kinase activity-dependent function in platelet aggregation. Involved in endothelial progenitor cell migration. Negative regulator of cardiac contractility. Modulates cardiac contractility by anchoring protein kinase A (PKA) and PDE3B activation, reducing cAMP levels. Regulates cardiac contractility also by promoting beta-adrenergic receptor internalization by binding to GRK2 and by non-muscle tropomyosin phosphorylation. Also has serine/threonine protein kinase activity: both lipid and protein kinase activities are required for beta-adrenergic receptor endocytosis. May also have a scaffolding role in modulating cardiac contractility. Contribute to cardiac hypertrophy under pathological stress. Through simultaneous binding of PDE3B to RAPGEF3 and PIK3R6 is assembled in a signaling complex in which the PI3K gamma complex is activated by RAPGEF3 and which is involved in angiogenesis. In neutrophils, participates in a phospholipase C-activating N-formyl peptide-activated GPCR (G protein-coupled receptor) signaling pathway downstream of RASGRP4-mediated Ras-activation, to promote neutrophil functional responses. In Sus scrofa (Pig), this protein is Phosphatidylinositol 4,5-bisphosphate 3-kinase catalytic subunit gamma isoform (PIK3CG).